The following is a 400-amino-acid chain: Enolase (400 aa).

Gln154 contributes to the (2R)-2-phosphoglycerate binding site. Residue Glu197 is the Proton donor of the active site. Mg(2+) is bound by residues Asp233, Glu274, and Asp301. 4 residues coordinate (2R)-2-phosphoglycerate: Lys326, Arg355, Ser356, and Lys377. Lys326 (proton acceptor) is an active-site residue.

Belongs to the enolase family. Requires Mg(2+) as cofactor.

The protein localises to the cytoplasm. Its subcellular location is the secreted. The protein resides in the cell surface. It carries out the reaction (2R)-2-phosphoglycerate = phosphoenolpyruvate + H2O. Its pathway is carbohydrate degradation; glycolysis; pyruvate from D-glyceraldehyde 3-phosphate: step 4/5. Catalyzes the reversible conversion of 2-phosphoglycerate (2-PG) into phosphoenolpyruvate (PEP). It is essential for the degradation of carbohydrates via glycolysis. The sequence is that of Enolase from Picrophilus torridus (strain ATCC 700027 / DSM 9790 / JCM 10055 / NBRC 100828 / KAW 2/3).